Reading from the N-terminus, the 530-residue chain is Phosphoenolpyruvate carboxykinase (ATP) 2 (530 aa).

Positions 54, 191, and 197 each coordinate substrate. ATP is bound by residues K197, H216, and 232-240; that span reads GLSGTGKTT. Positions 197 and 216 each coordinate Mn(2+). A Mn(2+)-binding site is contributed by D253. Residues E281, R318, 437–438, and T443 each bind ATP; that span reads RV. R318 is a substrate binding site.

It belongs to the phosphoenolpyruvate carboxykinase (ATP) family. Mn(2+) is required as a cofactor.

It is found in the cytoplasm. The catalysed reaction is oxaloacetate + ATP = phosphoenolpyruvate + ADP + CO2. Its pathway is carbohydrate biosynthesis; gluconeogenesis. In terms of biological role, involved in the gluconeogenesis. Catalyzes the conversion of oxaloacetate (OAA) to phosphoenolpyruvate (PEP) through direct phosphoryl transfer between the nucleoside triphosphate and OAA. The protein is Phosphoenolpyruvate carboxykinase (ATP) 2 of Salinibacter ruber (strain DSM 13855 / M31).